We begin with the raw amino-acid sequence, 82 residues long: EMBRYO SURROUNDING FACTOR 1-like protein 10 (82 aa).

A signal peptide spans 1-22 (MSSLYFAILCLFMIFLVPLHEF). Cystine bridges form between cysteine 39–cysteine 55, cysteine 44–cysteine 74, cysteine 53–cysteine 70, and cysteine 56–cysteine 63.

It belongs to the MEG family. Expressed in stems, leaves and flowers.

This chain is EMBRYO SURROUNDING FACTOR 1-like protein 10 (ESFL10), found in Arabidopsis thaliana (Mouse-ear cress).